The chain runs to 520 residues: Alkyl hydroperoxide reductase subunit F (520 aa).

Position 213 to 228 (213 to 228 (DVLVVGGGPAGAAAAI)) interacts with FAD. Cys-343 and Cys-346 are disulfide-bonded. An NAD(+)-binding site is contributed by 355-369 (RVAVIGGGNSGVEAA). 476–486 (TSIPGVFAAGD) provides a ligand contact to FAD.

Belongs to the class-II pyridine nucleotide-disulfide oxidoreductase family. In terms of assembly, homodimer. FAD serves as cofactor.

In terms of biological role, serves to protect the cell against DNA damage by alkyl hydroperoxides. It can use either NADH or NADPH as electron donor for direct reduction of redox dyes or of alkyl hydroperoxides when combined with the AhpC protein. This chain is Alkyl hydroperoxide reductase subunit F (ahpF), found in Pseudomonas putida (Arthrobacter siderocapsulatus).